The chain runs to 331 residues: Ribose-phosphate pyrophosphokinase (331 aa).

Position 55-57 (D55–E57) interacts with ATP. Residues H148 and D187 each coordinate Mg(2+). The active site involves K211. D-ribose 5-phosphate is bound by residues R213, D237, and D241 to T245.

It belongs to the ribose-phosphate pyrophosphokinase family. Class I subfamily. Homohexamer. It depends on Mg(2+) as a cofactor.

The protein localises to the cytoplasm. It carries out the reaction D-ribose 5-phosphate + ATP = 5-phospho-alpha-D-ribose 1-diphosphate + AMP + H(+). It participates in metabolic intermediate biosynthesis; 5-phospho-alpha-D-ribose 1-diphosphate biosynthesis; 5-phospho-alpha-D-ribose 1-diphosphate from D-ribose 5-phosphate (route I): step 1/1. Involved in the biosynthesis of the central metabolite phospho-alpha-D-ribosyl-1-pyrophosphate (PRPP) via the transfer of pyrophosphoryl group from ATP to 1-hydroxyl of ribose-5-phosphate (Rib-5-P). The polypeptide is Ribose-phosphate pyrophosphokinase (Synechococcus elongatus (strain ATCC 33912 / PCC 7942 / FACHB-805) (Anacystis nidulans R2)).